We begin with the raw amino-acid sequence, 149 residues long: Flagellar assembly factor FliW (149 aa).

This sequence belongs to the FliW family. Interacts with translational regulator CsrA and flagellin(s).

The protein resides in the cytoplasm. In terms of biological role, acts as an anti-CsrA protein, binds CsrA and prevents it from repressing translation of its target genes, one of which is flagellin. Binds to flagellin and participates in the assembly of the flagellum. In Thermotoga neapolitana (strain ATCC 49049 / DSM 4359 / NBRC 107923 / NS-E), this protein is Flagellar assembly factor FliW.